The following is a 286-amino-acid chain: tRNA (guanine-N(7)-)-methyltransferase (286 aa).

The interval 1-22 is disordered; the sequence is MGRARPKSQKRGDYRVSRSQEN. Residues G104, 127-128, 162-163, and C182 contribute to the S-adenosyl-L-methionine site; these read EI and NS. D185 is an active-site residue. 260–262 is an S-adenosyl-L-methionine binding site; sequence TEE.

It belongs to the class I-like SAM-binding methyltransferase superfamily. TrmB family. Forms a complex with TRM82.

It is found in the nucleus. The enzyme catalyses guanosine(46) in tRNA + S-adenosyl-L-methionine = N(7)-methylguanosine(46) in tRNA + S-adenosyl-L-homocysteine. Its pathway is tRNA modification; N(7)-methylguanine-tRNA biosynthesis. Its function is as follows. Catalyzes the formation of N(7)-methylguanine at position 46 (m7G46) in tRNA. This Colletotrichum orbiculare (strain 104-T / ATCC 96160 / CBS 514.97 / LARS 414 / MAFF 240422) (Cucumber anthracnose fungus) protein is tRNA (guanine-N(7)-)-methyltransferase.